Here is a 57-residue protein sequence, read N- to C-terminus: Small ribosomal subunit protein eS31 (57 aa).

Zn(2+)-binding residues include cysteine 29, cysteine 32, cysteine 47, and cysteine 50. A C4-type zinc finger spans residues 29–50 (CPRCGPGVFMANHKDRWSCGRC).

This sequence belongs to the eukaryotic ribosomal protein eS31 family. Part of the 30S ribosomal subunit. Zn(2+) serves as cofactor.

The chain is Small ribosomal subunit protein eS31 from Thermococcus kodakarensis (strain ATCC BAA-918 / JCM 12380 / KOD1) (Pyrococcus kodakaraensis (strain KOD1)).